Reading from the N-terminus, the 349-residue chain is Phosphate carrier protein, mitochondrial (349 aa).

Solcar repeat units lie at residues 47–131 (KYFA…FKVQ), 144–229 (YRTF…TVEL), and 246–324 (EQLV…VKVW). 6 consecutive transmembrane segments (helical) span residues 48 to 68 (YFALCGLGGILSCGITHTAVV), 108 to 128 (APTFIGYSLQGLCKFGLYEVF), 147 to 167 (FVYLAASASAEFFADIALSPL), 207 to 227 (PLWGRQIPYTMMKFACFEKTV), 248 to 268 (LVVTFAAGYIAGVFCAIVSHP), and 304 to 324 (IIMIGTLTALQWFIYDAVKVW).

This sequence belongs to the mitochondrial carrier (TC 2.A.29) family.

It localises to the mitochondrion inner membrane. Transport of phosphate groups from the cytosol to the mitochondrial matrix. The sequence is that of Phosphate carrier protein, mitochondrial from Choristoneura fumiferana (Spruce budworm moth).